We begin with the raw amino-acid sequence, 347 residues long: NADH-ubiquinone oxidoreductase chain 2 (347 aa).

A run of 10 helical transmembrane segments spans residues 26-46 (WLLAWMGLEMNMLAMIPILTM), 60-80 (FLTQATASMLLMMAIMINFML), 96-116 (SMALAALMMKLGLAPFHFWVP), 123-143 (SLTSGMILLTWQKLAPLSILY), 151-171 (ITILTVSGLLSILVGGWGGLN), 178-198 (ILAYSSIAHMGWMLIIMPYNP), 200-220 (LTILNLLIYILMTLSIFMIMM), 240-260 (MMILLTITLLSLGGLPPLSGF), 274-294 (DSIILPMSMAMFALLNLYFYM), and 325-345 (LLPPLIILSTLTLPLTPFLSI).

This sequence belongs to the complex I subunit 2 family. In terms of assembly, core subunit of respiratory chain NADH dehydrogenase (Complex I) which is composed of 45 different subunits. Interacts with TMEM242.

The protein localises to the mitochondrion inner membrane. It catalyses the reaction a ubiquinone + NADH + 5 H(+)(in) = a ubiquinol + NAD(+) + 4 H(+)(out). Functionally, core subunit of the mitochondrial membrane respiratory chain NADH dehydrogenase (Complex I) which catalyzes electron transfer from NADH through the respiratory chain, using ubiquinone as an electron acceptor. Essential for the catalytic activity and assembly of complex I. The polypeptide is NADH-ubiquinone oxidoreductase chain 2 (Dugong dugon (Dugong)).